The chain runs to 1035 residues: GRB10-interacting GYF protein 1 (1035 aa).

S24, S28, S137, and S157 each carry phosphoserine. A disordered region spans residues 105–422 (KGAGPPLAGT…AGPPGDLEDD (318 aa)). 2 stretches are compositionally biased toward basic and acidic residues: residues 148-179 (SPRE…RCGF) and 186-203 (PRKE…SLRE). The residue at position 230 (S230) is a Phosphoserine. Basic and acidic residues predominate over residues 239–267 (GWREHGERRRKFEFDLRGDRGGCGEEEGR). Acidic residues-rich tracts occupy residues 295–304 (CLDDEDEEMG) and 324–349 (PEEQ…EEGP). S341 is subject to Phosphoserine. Residues 367-378 (SSPSPLPTLGPL) are compositionally biased toward low complexity. The span at 388–401 (TAEKEPPAAEDDIR) shows a compositional bias: basic and acidic residues. S406 is subject to Phosphoserine. Residues 406–417 (SPGVGSSAGPPG) show a composition bias toward low complexity. A GYF domain is found at 474–522 (ARKWFYKDPQGEIQGPFTTQEMAEWFQAGYFSMSLLVKRGCDEGFQPLG). Phosphoserine occurs at positions 538 and 638. 3 disordered regions span residues 621–640 (PPRG…LSVP), 696–724 (KREE…QEEE), and 825–879 (WGGP…RPIR). Positions 629 to 639 (LLPTMSRSLSV) are enriched in polar residues. A compositionally biased stretch (basic and acidic residues) spans 696-722 (KREEEERKRREEKRRQQQQEEQKRRQE). Positions 857–874 (LKNSRSSPSLSDSYSHLS) are enriched in low complexity. S862 carries the phosphoserine modification.

It belongs to the GIGYF family. In terms of assembly, interacts with GRB10. This transient binding is increased under IGF1 stimulation and leads to recruitment of GIGYF1/GRB10 complex to IGF1 receptor. Interacts with DDX6.

Functionally, may act cooperatively with GRB10 to regulate tyrosine kinase receptor signaling. May increase IGF1 receptor phosphorylation under IGF1 stimulation as well as phosphorylation of IRS1 and SHC1. This is GRB10-interacting GYF protein 1 (GIGYF1) from Homo sapiens (Human).